Here is a 377-residue protein sequence, read N- to C-terminus: Spermidine/putrescine import ATP-binding protein PotA (377 aa).

Positions 18-248 constitute an ABC transporter domain; sequence IRLSGISKSF…PKNLFVARFI (231 aa). Residue 50–57 participates in ATP binding; sequence GPSGCGKT.

Belongs to the ABC transporter superfamily. Spermidine/putrescine importer (TC 3.A.1.11.1) family. The complex is composed of two ATP-binding proteins (PotA), two transmembrane proteins (PotB and PotC) and a solute-binding protein (PotD).

It localises to the cell inner membrane. It carries out the reaction ATP + H2O + polyamine-[polyamine-binding protein]Side 1 = ADP + phosphate + polyamineSide 2 + [polyamine-binding protein]Side 1.. Part of the ABC transporter complex PotABCD involved in spermidine/putrescine import. Responsible for energy coupling to the transport system. The sequence is that of Spermidine/putrescine import ATP-binding protein PotA from Vibrio parahaemolyticus serotype O3:K6 (strain RIMD 2210633).